Reading from the N-terminus, the 81-residue chain is Cytotoxin I-like T-15 (81 aa).

A signal peptide spans 1-21 (MKTLLLTLVVVTIVCLDLGYT). Cystine bridges form between C24/C42, C35/C59, C63/C74, and C75/C80.

It belongs to the three-finger toxin family. Short-chain subfamily. Type IA cytotoxin sub-subfamily. In terms of assembly, monomer in solution; Homodimer and oligomer in the presence of negatively charged lipids forming a pore with a size ranging between 20 and 30 Angstroms. As to expression, expressed by the venom gland.

It localises to the secreted. The protein resides in the target cell membrane. In terms of biological role, shows cytolytic activity on many different cells by forming pore in lipid membranes. In vivo, increases heart rate or kills the animal by cardiac arrest. In addition, it binds to heparin with high affinity, interacts with Kv channel-interacting protein 1 (KCNIP1) in a calcium-independent manner, and binds to integrin alpha-V/beta-3 (ITGAV/ITGB3) with moderate affinity. This chain is Cytotoxin I-like T-15, found in Naja atra (Chinese cobra).